The chain runs to 333 residues: uncharacterized protein (333 aa).

The Radical SAM core domain maps to 67–274 (HFYPTTQVVS…LEMARNLAIE (208 aa)). The [4Fe-4S] cluster site is built by Cys82, Cys86, and Cys89.

The cofactor is [4Fe-4S] cluster.

This is an uncharacterized protein from Methanocaldococcus jannaschii (strain ATCC 43067 / DSM 2661 / JAL-1 / JCM 10045 / NBRC 100440) (Methanococcus jannaschii).